The chain runs to 453 residues: Bifunctional protein GlmU (453 aa).

Residues 1–227 are pyrophosphorylase; the sequence is MNKLSVVILA…LMEVEGVNNR (227 aa). UDP-N-acetyl-alpha-D-glucosamine contacts are provided by residues 9-12, lysine 23, glutamine 74, 79-80, 101-103, glycine 138, glutamate 152, asparagine 167, and asparagine 225; these read LAAG, GT, and YGD. Residue aspartate 103 coordinates Mg(2+). Residue asparagine 225 coordinates Mg(2+). The tract at residues 228–248 is linker; that stretch reads LQLANLERHFQRKQVEKLLLA. The tract at residues 249-453 is N-acetyltransferase; it reads GVTFADPARF…ISNWQRPKRK (205 aa). UDP-N-acetyl-alpha-D-glucosamine-binding residues include arginine 331 and lysine 349. The Proton acceptor role is filled by histidine 361. UDP-N-acetyl-alpha-D-glucosamine is bound by residues tyrosine 364 and asparagine 375. Acetyl-CoA-binding positions include alanine 378, 384-385, serine 403, alanine 421, and arginine 438; that span reads NY.

The protein in the N-terminal section; belongs to the N-acetylglucosamine-1-phosphate uridyltransferase family. This sequence in the C-terminal section; belongs to the transferase hexapeptide repeat family. As to quaternary structure, homotrimer. Mg(2+) is required as a cofactor.

Its subcellular location is the cytoplasm. The catalysed reaction is alpha-D-glucosamine 1-phosphate + acetyl-CoA = N-acetyl-alpha-D-glucosamine 1-phosphate + CoA + H(+). It catalyses the reaction N-acetyl-alpha-D-glucosamine 1-phosphate + UTP + H(+) = UDP-N-acetyl-alpha-D-glucosamine + diphosphate. The protein operates within nucleotide-sugar biosynthesis; UDP-N-acetyl-alpha-D-glucosamine biosynthesis; N-acetyl-alpha-D-glucosamine 1-phosphate from alpha-D-glucosamine 6-phosphate (route II): step 2/2. It participates in nucleotide-sugar biosynthesis; UDP-N-acetyl-alpha-D-glucosamine biosynthesis; UDP-N-acetyl-alpha-D-glucosamine from N-acetyl-alpha-D-glucosamine 1-phosphate: step 1/1. Its pathway is bacterial outer membrane biogenesis; LPS lipid A biosynthesis. Its function is as follows. Catalyzes the last two sequential reactions in the de novo biosynthetic pathway for UDP-N-acetylglucosamine (UDP-GlcNAc). The C-terminal domain catalyzes the transfer of acetyl group from acetyl coenzyme A to glucosamine-1-phosphate (GlcN-1-P) to produce N-acetylglucosamine-1-phosphate (GlcNAc-1-P), which is converted into UDP-GlcNAc by the transfer of uridine 5-monophosphate (from uridine 5-triphosphate), a reaction catalyzed by the N-terminal domain. The protein is Bifunctional protein GlmU of Histophilus somni (strain 129Pt) (Haemophilus somnus).